Reading from the N-terminus, the 245-residue chain is Rhamnosyl O-methyltransferase (245 aa).

A signal peptide spans 1 to 38; sequence MGLVWRSRTSLVGQLIGLVRLVASFAAQLFYRPSDAVA.

It belongs to the rhamnosyl O-methyltransferase family.

In terms of biological role, catalyzes the O-methylation of the hydroxyl group located on C-2 of the first rhamnosyl residue linked to the phenolic group of glycosylated phenolphthiocerol dimycocerosates (PGL) and p-hydroxybenzoic acid derivatives (p-HBAD). In Mycobacterium bovis (strain ATCC BAA-935 / AF2122/97), this protein is Rhamnosyl O-methyltransferase.